A 120-amino-acid polypeptide reads, in one-letter code: Kidney androgen-regulated protein (120 aa).

The N-terminal stretch at 1-18 is a signal peptide; that stretch reads MMICKVLVITVFCVLTVA.

The protein resides in the secreted. In Rattus norvegicus (Rat), this protein is Kidney androgen-regulated protein (Kap).